Reading from the N-terminus, the 213-residue chain is Uridine kinase (213 aa).

G13–T20 is an ATP binding site.

Belongs to the uridine kinase family.

It localises to the cytoplasm. The enzyme catalyses uridine + ATP = UMP + ADP + H(+). It catalyses the reaction cytidine + ATP = CMP + ADP + H(+). The protein operates within pyrimidine metabolism; CTP biosynthesis via salvage pathway; CTP from cytidine: step 1/3. Its pathway is pyrimidine metabolism; UMP biosynthesis via salvage pathway; UMP from uridine: step 1/1. The sequence is that of Uridine kinase (udk) from Mycoplasma pneumoniae (strain ATCC 29342 / M129 / Subtype 1) (Mycoplasmoides pneumoniae).